We begin with the raw amino-acid sequence, 367 residues long: MSNSQTLVVKLGTSVLTGGSRRLNRAHIVELVRQCAQQHAAGHRIVIVTSGAIAAGREHLGYPELPATIASKQLLAAVGQSRLIQLWEQLFSIYGIHVGQMLLTRADMEDRERFLNARDTLTALLDNRIVPVINENDAVATAEIKVGDNDNLSALAAILAGADKLLLLTDQQGLFTADPRNNPQAELIQDVYGIDDTLRAIAGDSVSGLGTGGMGTKLQAADVAGRAGIETVIAAGSKPGVINDVIEGLPVGTRFHPQQTPLENRKRWIFGAPPAGEITVDEGAQSAILERGSSLLPKGIKSVTGNFSRGEVIRIRNLEGRDIAHGVSRYNSDALRRIAGHHSQQIDAILGYEYGPVAVHRDDMITQ.

Lys-10 lines the ATP pocket. Positions 50, 137, and 149 each coordinate substrate. ATP is bound by residues 169–170 (TD) and 211–217 (TGGMGTK). The region spanning 275 to 353 (AGEITVDEGA…QQIDAILGYE (79 aa)) is the PUA domain.

It belongs to the glutamate 5-kinase family.

It localises to the cytoplasm. The catalysed reaction is L-glutamate + ATP = L-glutamyl 5-phosphate + ADP. It functions in the pathway amino-acid biosynthesis; L-proline biosynthesis; L-glutamate 5-semialdehyde from L-glutamate: step 1/2. Functionally, catalyzes the transfer of a phosphate group to glutamate to form L-glutamate 5-phosphate. This is Glutamate 5-kinase from Cronobacter sakazakii (strain ATCC BAA-894) (Enterobacter sakazakii).